A 580-amino-acid polypeptide reads, in one-letter code: Pescadillo homolog (580 aa).

Acidic residues predominate over residues 291 to 303; that stretch reads EPEEENEVDEFPA. A disordered region spans residues 291 to 321; it reads EPEEENEVDEFPADPENAGQEEEQKKQLQEE. A compositionally biased stretch (basic and acidic residues) spans 312-321; that stretch reads EEQKKQLQEE. The BRCT domain occupies 323 to 416; it reads KHKSMFVGLK…MLLPVEDYFP (94 aa). A disordered region spans residues 448 to 496; it reads KGENPEDDDDDDEEDDEDEEEDDEDEDDEENEEEEEDKKLRHLENKKVG. The segment covering 452-483 has biased composition (acidic residues); it reads PEDDDDDDEEDDEDEEEDDEDEDDEENEEEEE. Residues 484–494 show a composition bias toward basic and acidic residues; that stretch reads DKKLRHLENKK.

The protein belongs to the pescadillo family. In terms of assembly, component of the PeBoW complex, composed of bop1, pes1 and wdr12. The complex is held together by bop1, which interacts with pes1 via its N-terminal domain and with wdr12 via a high-affinity interaction between the seven-bladed beta-propeller domains of the 2 proteins. The PeBoW complex associates with the 66S pre-ribosome.

It is found in the nucleus. The protein resides in the nucleolus. The protein localises to the nucleoplasm. Component of the PeBoW complex, which is required for maturation of 28S and 5.8S ribosomal RNAs and formation of the 60S ribosome. This chain is Pescadillo homolog (pes1), found in Xenopus tropicalis (Western clawed frog).